The sequence spans 84 residues: Hirudin-HM2 (84 aa).

A signal peptide spans 1–20 (MFSLKLFVVFLAVCICVSQA). Positions 21-23 (VSY) are interaction with thrombin active site. Cystine bridges form between cysteine 26-cysteine 34, cysteine 36-cysteine 48, and cysteine 42-cysteine 57. The segment at 53–84 (SGNQCVHGEGTPKPKSQTEGDFEEIPDEDILN) is disordered. Threonine 63 carries an O-linked (GalNAc...) threonine glycan. Residues 72-84 (GDFEEIPDEDILN) show a composition bias toward acidic residues. The tract at residues 73-84 (DFEEIPDEDILN) is interaction with fibrinogen-binding exosite of thrombin.

Belongs to the protease inhibitor I14 (hirudin) family.

The protein resides in the secreted. In terms of biological role, hirudin is a potent thrombin-specific protease inhibitor. It forms a stable non-covalent complex with alpha-thrombin, thereby abolishing its ability to cleave fibrinogen. The chain is Hirudin-HM2 from Hirudinaria manillensis (Asian medical leech).